A 153-amino-acid polypeptide reads, in one-letter code: MADVSDAVDVGGAQPKKRTFRKFSYRGVDLDQLLDMGTDELVKLFHARARRRFQRGLKRKPMALIKKLRKAKRDAPPGEKPEPVRTHLRNMIIVPEMIGSIIGVYNGKTFNQVEIKPEMIGHYLAEFSISYKPVKHGRPGIGATHSSRFIPLK.

The protein belongs to the universal ribosomal protein uS19 family.

This chain is Small ribosomal subunit protein uS19 (RPS15), found in Elaeis oleifera (American oil palm).